Reading from the N-terminus, the 279-residue chain is Large ribosomal subunit protein uL2 (279 aa).

The interval 222 to 279 is disordered; that stretch reads GMAMNPVDHPMGGGEGKSKSGGGRRHPKSPWGQLAKGLKTRNKKKASQKLIVRGRNAK. Residues 232–242 are compositionally biased toward gly residues; sequence MGGGEGKSKSG. Basic residues predominate over residues 259 to 268; that stretch reads LKTRNKKKAS.

The protein belongs to the universal ribosomal protein uL2 family. In terms of assembly, part of the 50S ribosomal subunit. Forms a bridge to the 30S subunit in the 70S ribosome.

In terms of biological role, one of the primary rRNA binding proteins. Required for association of the 30S and 50S subunits to form the 70S ribosome, for tRNA binding and peptide bond formation. It has been suggested to have peptidyltransferase activity; this is somewhat controversial. Makes several contacts with the 16S rRNA in the 70S ribosome. The polypeptide is Large ribosomal subunit protein uL2 (Chlorobium phaeobacteroides (strain DSM 266 / SMG 266 / 2430)).